A 282-amino-acid polypeptide reads, in one-letter code: Elongation factor Ts (282 aa).

The segment at threonine 80 to valine 83 is involved in Mg(2+) ion dislocation from EF-Tu.

It belongs to the EF-Ts family.

Its subcellular location is the cytoplasm. Its function is as follows. Associates with the EF-Tu.GDP complex and induces the exchange of GDP to GTP. It remains bound to the aminoacyl-tRNA.EF-Tu.GTP complex up to the GTP hydrolysis stage on the ribosome. The polypeptide is Elongation factor Ts (Aliivibrio salmonicida (strain LFI1238) (Vibrio salmonicida (strain LFI1238))).